The primary structure comprises 307 residues: UDP-N-acetylenolpyruvoylglucosamine reductase (307 aa).

Residues 34–198 (LGGKADVYIT…LEATFALKKA (165 aa)) form the FAD-binding PCMH-type domain. Residue Arg177 is part of the active site. Ser227 acts as the Proton donor in catalysis. Residue Glu297 is part of the active site.

This sequence belongs to the MurB family. FAD is required as a cofactor.

Its subcellular location is the cytoplasm. The catalysed reaction is UDP-N-acetyl-alpha-D-muramate + NADP(+) = UDP-N-acetyl-3-O-(1-carboxyvinyl)-alpha-D-glucosamine + NADPH + H(+). It functions in the pathway cell wall biogenesis; peptidoglycan biosynthesis. Functionally, cell wall formation. In Oceanobacillus iheyensis (strain DSM 14371 / CIP 107618 / JCM 11309 / KCTC 3954 / HTE831), this protein is UDP-N-acetylenolpyruvoylglucosamine reductase.